A 332-amino-acid chain; its full sequence is Glycerol-3-phosphate dehydrogenase [NAD(P)+] (332 aa).

3 residues coordinate NADPH: tryptophan 13, arginine 33, and lysine 105. Sn-glycerol 3-phosphate-binding residues include lysine 105, glycine 134, and serine 136. Alanine 138 provides a ligand contact to NADPH. Positions 189, 242, 252, 253, and 254 each coordinate sn-glycerol 3-phosphate. The active-site Proton acceptor is lysine 189. Arginine 253 contributes to the NADPH binding site. Glutamate 279 contributes to the NADPH binding site.

The protein belongs to the NAD-dependent glycerol-3-phosphate dehydrogenase family.

The protein localises to the cytoplasm. It carries out the reaction sn-glycerol 3-phosphate + NAD(+) = dihydroxyacetone phosphate + NADH + H(+). The catalysed reaction is sn-glycerol 3-phosphate + NADP(+) = dihydroxyacetone phosphate + NADPH + H(+). It participates in membrane lipid metabolism; glycerophospholipid metabolism. Catalyzes the reduction of the glycolytic intermediate dihydroxyacetone phosphate (DHAP) to sn-glycerol 3-phosphate (G3P), the key precursor for phospholipid synthesis. The chain is Glycerol-3-phosphate dehydrogenase [NAD(P)+] from Halorhodospira halophila (strain DSM 244 / SL1) (Ectothiorhodospira halophila (strain DSM 244 / SL1)).